Here is a 198-residue protein sequence, read N- to C-terminus: DnaJ homolog subfamily C member 12 (198 aa).

At Met-1 the chain carries N-acetylmethionine. In terms of domain architecture, J spans 14-79; that stretch reads DYYALLGCDE…ESRARYDHWR (66 aa). A disordered region spans residues 114–177; it reads EGSGQTFTSS…GLSDLNCGHL (64 aa). Positions 116–125 are enriched in polar residues; that stretch reads SGQTFTSSVP. Basic and acidic residues predominate over residues 126–156; the sequence is NKERSEQRETKKGDPDSNPEKMKQKEPKFPE. A phosphoserine mark is found at Ser-160, Ser-166, and Ser-182.

As to quaternary structure, interacts with HSPA8. Interacts with TPH1. Interacts with TPH2. As to expression, highest levels of expression are detected in kidney, pineal gland, and raphe nuclei in the brain where it localizes to serotonerigic neurons.

The protein localises to the cytoplasm. Its function is as follows. Probable co-chaperone that participates in the proper folding of biopterin-dependent aromatic amino acid hydroxylases, which include phenylalanine-4-hydroxylase (PAH), tyrosine 3-monooxygenase (TH) and peripheral and neuronal tryptophan hydroxylases (TPH1 and TPH2). The chain is DnaJ homolog subfamily C member 12 (Dnajc12) from Mus musculus (Mouse).